The following is a 382-amino-acid chain: Dual-specificity RNA methyltransferase RlmN (382 aa).

The active-site Proton acceptor is glutamate 96. In terms of domain architecture, Radical SAM core spans 102–342 (QGKRGTLCVS…VRTTRGEDID (241 aa)). Cysteine 109 and cysteine 345 form a disulfide bridge. 3 residues coordinate [4Fe-4S] cluster: cysteine 116, cysteine 120, and cysteine 123. S-adenosyl-L-methionine is bound by residues 170–171 (GE), serine 202, 224–226 (SLH), and asparagine 302. The active-site S-methylcysteine intermediate is the cysteine 345.

This sequence belongs to the radical SAM superfamily. RlmN family. [4Fe-4S] cluster serves as cofactor.

The protein localises to the cytoplasm. It carries out the reaction adenosine(2503) in 23S rRNA + 2 reduced [2Fe-2S]-[ferredoxin] + 2 S-adenosyl-L-methionine = 2-methyladenosine(2503) in 23S rRNA + 5'-deoxyadenosine + L-methionine + 2 oxidized [2Fe-2S]-[ferredoxin] + S-adenosyl-L-homocysteine. The catalysed reaction is adenosine(37) in tRNA + 2 reduced [2Fe-2S]-[ferredoxin] + 2 S-adenosyl-L-methionine = 2-methyladenosine(37) in tRNA + 5'-deoxyadenosine + L-methionine + 2 oxidized [2Fe-2S]-[ferredoxin] + S-adenosyl-L-homocysteine. In terms of biological role, specifically methylates position 2 of adenine 2503 in 23S rRNA and position 2 of adenine 37 in tRNAs. m2A2503 modification seems to play a crucial role in the proofreading step occurring at the peptidyl transferase center and thus would serve to optimize ribosomal fidelity. This is Dual-specificity RNA methyltransferase RlmN from Pseudomonas syringae pv. syringae (strain B728a).